Here is a 470-residue protein sequence, read N- to C-terminus: D-serine/D-alanine/glycine transporter (470 aa).

12 helical membrane passes run 30–50 (LIAIGGAIGTGLFMGSGKTIS), 51–71 (LAGPSIIFVYMIIGFMLFFVM), 102–122 (FTGWTYWFCWVVTGMADVVAI), 128–148 (FWFPGLSDWVASLSVIILLLV), 162–182 (FWFAMIKIVAIVSLIVVGLVM), 211–231 (LSGFFAGFQIAVFAFVGIELV), 256–276 (IIMFYVFSLIVIMSVTPWSSV), 283–303 (FVELFVLVGLPAAASVINFVV), 350–370 (FSCICLLGGVVMLYVNPSVIG), 371–391 (AFTMITTVSAILFMFVWTIIL), 413–433 (PLGKLMCWVCMAFFVFVLVLL), and 441–461 (QALLVTPLWFIALGLGWLFIG).

Belongs to the amino acid-polyamine-organocation (APC) superfamily. Amino acid transporter (AAT) (TC 2.A.3.1) family.

The protein localises to the cell inner membrane. The enzyme catalyses D-alanine(in) + H(+)(in) = D-alanine(out) + H(+)(out). It catalyses the reaction D-serine(out) + H(+)(out) = D-serine(in) + H(+)(in). It carries out the reaction glycine(in) + H(+)(in) = glycine(out) + H(+)(out). The catalysed reaction is D-cycloserine(in) + H(+)(in) = D-cycloserine(out) + H(+)(out). Its activity is regulated as follows. Uptake of D-serine is inhibited by D-alanine, D-cycloserine, glycine and at high concentrations of D-threonine. In terms of biological role, permease that is involved in the transport across the cytoplasmic membrane of D-alanine, D-serine and glycine. Is the only transporter of D-alanine. Transports D-serine less efficiently than DsdX. In addition, in minimal media, transports the broad spectrum antibiotic D-cycloserine into the cell. Transports D-cycloserine only in minimal media, and not in a complex medium, suggesting that CycA does not play a role in D-cycloserine transport when E.coli is grown in a complex or biologically relevant medium, probably due to competition from other CycA substrates present in the medium. The chain is D-serine/D-alanine/glycine transporter (cycA) from Escherichia coli O6:H1 (strain CFT073 / ATCC 700928 / UPEC).